Here is a 1035-residue protein sequence, read N- to C-terminus: Cell-division control histidine kinase PdhS (1035 aa).

The tract at residues 1–613 (MSGSYPFIDI…HADGSEEPVD (613 aa)) is important for polar localization. The tract at residues 500–533 (QGLANTRAESETPVSETSSIEPVEPTPPVKTRSE) is disordered. Positions 614 to 1035 (AHLNAIAWRG…VFPPTRVLAD (422 aa)) are interaction with DivK. One can recognise a PAS domain in the interval 659–730 (HVEELKTILD…YLHGLSGNGV (72 aa)). Residues 802-1031 (RISHEIRTPL…VVEIVFPPTR (230 aa)) enclose the Histidine kinase domain. The residue at position 805 (histidine 805) is a Phosphohistidine; by autocatalysis.

In terms of assembly, interacts with DivK.

The protein localises to the cytoplasm. It carries out the reaction ATP + protein L-histidine = ADP + protein N-phospho-L-histidine.. Functions as a polar differentiation marker. Essential protein that, by localizing in the old pole of dividing cells, controls cell division and maturation, probably through control of DivK phosphorylation status and cellular distribution, which in turn regulates CtrA, a transcriptional regulator of the minB operon. The asymmetrical localization of this protein is probably required for cells to enter a new division cycle. This chain is Cell-division control histidine kinase PdhS (pdhS), found in Brucella suis biovar 1 (strain 1330).